Here is a 137-residue protein sequence, read N- to C-terminus: Large ribosomal subunit protein uL16 (137 aa).

This sequence belongs to the universal ribosomal protein uL16 family. Part of the 50S ribosomal subunit.

In terms of biological role, binds 23S rRNA and is also seen to make contacts with the A and possibly P site tRNAs. The protein is Large ribosomal subunit protein uL16 of Wolbachia sp. subsp. Brugia malayi (strain TRS).